The following is a 466-amino-acid chain: Metaxin-1 (466 aa).

Low complexity predominate over residues methionine 1–proline 19. A disordered region spans residues methionine 1–glycine 133. Residues tryptophan 20–proline 36 show a composition bias toward polar residues. Residues alanine 90 to proline 110 show a composition bias toward low complexity. Residues lysine 187, lysine 190, lysine 227, and lysine 317 each participate in a glycyl lysine isopeptide (Lys-Gly) (interchain with G-Cter in ubiquitin) cross-link. The helical transmembrane segment at isoleucine 421–valine 441 threads the bilayer.

The protein belongs to the metaxin family. In terms of assembly, interacts with MTX2/metaxin-2. Associates with the mitochondrial contact site and cristae organizing system (MICOS) complex, composed of at least MICOS10/MIC10, CHCHD3/MIC19, CHCHD6/MIC25, APOOL/MIC27, IMMT/MIC60, APOO/MIC23/MIC26 and QIL1/MIC13. This complex was also known under the names MINOS or MitOS complex. The MICOS complex associates with mitochondrial outer membrane proteins SAMM50, MTX1 and MTX2 (together described as components of the mitochondrial outer membrane sorting assembly machinery (SAM) complex) and DNAJC11, mitochondrial inner membrane protein TMEM11 and with HSPA9. The MICOS and SAM complexes together with DNAJC11 are part of a large protein complex spanning both membranes termed the mitochondrial intermembrane space bridging (MIB) complex. Interacts with ARMC1. In terms of processing, ubiquitinated by PRKN during mitophagy, leading to its degradation and enhancement of mitophagy. Deubiquitinated by USP30.

It localises to the membrane. Its subcellular location is the mitochondrion outer membrane. Functionally, involved in transport of proteins into the mitochondrion. Essential for embryonic development. The sequence is that of Metaxin-1 (MTX1) from Homo sapiens (Human).